We begin with the raw amino-acid sequence, 187 residues long: Elongation factor P 2 (187 aa).

This sequence belongs to the elongation factor P family.

The protein resides in the cytoplasm. It participates in protein biosynthesis; polypeptide chain elongation. Its function is as follows. Involved in peptide bond synthesis. Stimulates efficient translation and peptide-bond synthesis on native or reconstituted 70S ribosomes in vitro. Probably functions indirectly by altering the affinity of the ribosome for aminoacyl-tRNA, thus increasing their reactivity as acceptors for peptidyl transferase. The chain is Elongation factor P 2 from Geobacter sulfurreducens (strain ATCC 51573 / DSM 12127 / PCA).